Reading from the N-terminus, the 196-residue chain is DnaA initiator-associating protein DiaA (196 aa).

The 163-residue stretch at 34–196 (LVHSLLNGNK…DNTLFPHQDD (163 aa)) folds into the SIS domain.

Belongs to the SIS family. DiaA subfamily. As to quaternary structure, homotetramer; dimer of dimers.

In terms of biological role, required for the timely initiation of chromosomal replication via direct interactions with the DnaA initiator protein. This chain is DnaA initiator-associating protein DiaA, found in Salmonella enteritidis PT4 (strain P125109).